A 118-amino-acid chain; its full sequence is Melanoma antigen recognized by T-cells 1 (118 aa).

Residues 27–47 form a helical membrane-spanning segment; sequence AAGIGILTVILGVLLLIGCWY. Residues 48 to 118 lie on the Cytoplasmic side of the membrane; the sequence is CRRRNGYRAL…AEQSPPPYSP (71 aa). Residues 78–118 are disordered; it reads GFDHRDSKVSLQEKNCEPVVPNAPPAYEKLSAEQSPPPYSP. Ser108 is subject to Phosphoserine.

As to quaternary structure, interacts with PMEL. Interacts with GPR143. Post-translationally, acylated. As to expression, expression is restricted to melanoma and melanocyte cell lines and retina.

It is found in the endoplasmic reticulum membrane. Its subcellular location is the golgi apparatus. The protein localises to the trans-Golgi network membrane. The protein resides in the melanosome. In terms of biological role, involved in melanosome biogenesis by ensuring the stability of GPR143. Plays a vital role in the expression, stability, trafficking, and processing of melanocyte protein PMEL, which is critical to the formation of stage II melanosomes. The sequence is that of Melanoma antigen recognized by T-cells 1 (MLANA) from Homo sapiens (Human).